Consider the following 961-residue polypeptide: Exportin-T (961 aa).

Belongs to the exportin family.

The protein localises to the cytoplasm. The protein resides in the nucleus. Mediates the nuclear export of aminoacylated tRNAs. The chain is Exportin-T (xpot) from Danio rerio (Zebrafish).